Here is a 223-residue protein sequence, read N- to C-terminus: Thymine-DNA glycosylase (223 aa).

Positions 201, 208, 211, and 217 each coordinate [4Fe-4S] cluster.

This sequence belongs to the Nth/MutY family. The cofactor is [4Fe-4S] cluster.

The enzyme catalyses Hydrolyzes mismatched double-stranded DNA and polynucleotides, releasing free thymine.. Thymine cleavage is completely inhibited by Ni(2+), Co(2+), Zn(2+), Cu(2+) and Mn(2+). Activity is not affected by Mg(2+) and Ca(2+). Functionally, DNA glycosylase that excises thymine from T/G mismatches. Also has a weak DNA glycosylase activity on uracil paired with various bases. The polypeptide is Thymine-DNA glycosylase (Aeropyrum pernix (strain ATCC 700893 / DSM 11879 / JCM 9820 / NBRC 100138 / K1)).